The sequence spans 1336 residues: Mating factor M secretion protein mam1 (1336 aa).

Residues 1 to 29 (MHIHSDLSLPQFEHASIDPPSYSPQKSSF) form a disordered region. Over 1–91 (MHIHSDLSLP…ELAGVSSWSD (91 aa)) the chain is Cytoplasmic. A helical membrane pass occupies residues 92-112 (FFYLFHFSDIPLIFGTLIFTC). The ABC transmembrane type-1 1 domain occupies 104–396 (IFGTLIFTCL…ILPAIPDLIK (293 aa)). Over 113-153 (LSAALEPLMTWTTGKVFDALSQYATSQITLGKMISLINFNS) the chain is Extracellular. The helical transmembrane segment at 154–174 (LLITIFGLASCVFSFGVRFLW) threads the bilayer. Over 175–250 (QYLSAIAGKR…SCLIISFRYS (76 aa)) the chain is Cytoplasmic. Residues 251 to 271 (WSLTLVVLASYPIIILVVGFI) traverse the membrane as a helical segment. Residues 272 to 778 (NSFLSSAYEK…KSIWKVKKLR (507 aa)) are Extracellular-facing. The ABC transporter 1 domain occupies 433–668 (FRFDNVSFAY…EDFENNVSID (236 aa)). Asparagine 437 and asparagine 454 each carry an N-linked (GlcNAc...) asparagine glycan. ATP is bound at residue 469–476 (GPSGSGKS). 3 N-linked (GlcNAc...) asparagine glycosylation sites follow: asparagine 536, asparagine 664, and asparagine 697. The helical transmembrane segment at 779-799 (WFFLLGLLTSLIQGASVPIFA) threads the bilayer. Residues 781–1066 (FLLGLLTSLI…CIMSLPNVSA (286 aa)) enclose the ABC transmembrane type-1 2 domain. Residues 800–897 (YVISKCLNLF…ISDMRNMISS (98 aa)) are Cytoplasmic-facing. A helical membrane pass occupies residues 898–918 (LIEEVFIAFTMAIIGIAWSFA). Residues 919-1336 (TGWRLAAVLV…KLIHRGEWIE (418 aa)) are Extracellular-facing. N-linked (GlcNAc...) asparagine glycans are attached at residues asparagine 1011, asparagine 1063, and asparagine 1120. Residues 1099-1331 (IEFDGVSFAY…HTHFWKLIHR (233 aa)) enclose the ABC transporter 2 domain. 1135–1142 (GISGSGKS) provides a ligand contact to ATP. 2 N-linked (GlcNAc...) asparagine glycosylation sites follow: asparagine 1235 and asparagine 1280.

The protein belongs to the ABC transporter superfamily. Alpha-factor sex pheromone exporter (TC 3.A.1.206) family.

It localises to the membrane. Functionally, required in S.pombe M (minus) cells for production of M-factor pheromone. Involved in the transport of the farnesyl-derivation of the M-factor pheromone. The chain is Mating factor M secretion protein mam1 (mam1) from Schizosaccharomyces pombe (strain 972 / ATCC 24843) (Fission yeast).